A 54-amino-acid polypeptide reads, in one-letter code: Rubredoxin (54 aa).

Positions 2 to 52 (AKWVCKICGYIYDEDAGDPDNGISPGTKFEELPDDWVCPICGAPKSEFEKL) constitute a Rubredoxin-like domain. Fe cation-binding residues include Cys6, Cys9, Cys39, and Cys42.

It belongs to the rubredoxin family. Requires Fe(3+) as cofactor.

Rubredoxin is a small nonheme, iron protein lacking acid-labile sulfide. Its single Fe, chelated to 4 Cys, functions as an electron acceptor and may also stabilize the conformation of the molecule. The chain is Rubredoxin (rub) from Pyrococcus furiosus (strain ATCC 43587 / DSM 3638 / JCM 8422 / Vc1).